The sequence spans 550 residues: MTATTAQLLTETTPWLRLSEHSEEIDRSHLRALFASDPDRVDEFTVTAGDLHIDYSKHLITRRTRELLLDLARSVDVEGNRDAMLHGEHINTTENRAVLHTALRLPRDASLSVDGQDIVTDVHETLEKMGVFTERLRDGRWRGATGKKITTVVNIGIGGSDLGPVMVYRALRHYADAGISLRFVSNLDPADLTDNLRGLDPAATLFIVTSKTFSTLETLTNATAARRWLVSALGEDAVTKHFVAVSTNAQPVAEFGIAPENIFGFWDWVGGRYSVGSAIGLSVMAAIGRERFTELLDGFHTIDEHFRTAPPESNAPLLLGMLGVWYSSFRGAQSRAVLPYSNDLVRFPAYLQQLTMESNGKSVHTDGSPVRCDTGEIFWGEPGTNGQHAFFQLLHQGTRLVPADFIGFAQSTDDLPTMSGTGSMHDLLMANFFAQSKVLAFGKTRKEIAAESASADLIPHKVMPGNRPSTTILAPRLTPSTLGQLIALYEHQVFVQGVVWGIDSFDQWGVELGKVQALALAPAVAGEAAPCTGDTSTDALIRTYRRLRHP.

Catalysis depends on Glu357, which acts as the Proton donor. Active-site residues include His388 and Lys514.

The protein belongs to the GPI family.

It is found in the cytoplasm. It catalyses the reaction alpha-D-glucose 6-phosphate = beta-D-fructose 6-phosphate. The protein operates within carbohydrate biosynthesis; gluconeogenesis. Its pathway is carbohydrate degradation; glycolysis; D-glyceraldehyde 3-phosphate and glycerone phosphate from D-glucose: step 2/4. Catalyzes the reversible isomerization of glucose-6-phosphate to fructose-6-phosphate. This chain is Glucose-6-phosphate isomerase 3, found in Rhodococcus jostii (strain RHA1).